A 304-amino-acid chain; its full sequence is Ribonuclease Z (304 aa).

Zn(2+) contacts are provided by histidine 63, histidine 65, aspartate 67, histidine 68, histidine 143, aspartate 213, and histidine 271. Aspartate 67 acts as the Proton acceptor in catalysis.

Belongs to the RNase Z family. Homodimer. Zn(2+) serves as cofactor.

The catalysed reaction is Endonucleolytic cleavage of RNA, removing extra 3' nucleotides from tRNA precursor, generating 3' termini of tRNAs. A 3'-hydroxy group is left at the tRNA terminus and a 5'-phosphoryl group is left at the trailer molecule.. Zinc phosphodiesterase, which displays some tRNA 3'-processing endonuclease activity. Probably involved in tRNA maturation, by removing a 3'-trailer from precursor tRNA. The chain is Ribonuclease Z from Bacteroides fragilis (strain ATCC 25285 / DSM 2151 / CCUG 4856 / JCM 11019 / LMG 10263 / NCTC 9343 / Onslow / VPI 2553 / EN-2).